Reading from the N-terminus, the 350-residue chain is Adenine deaminase (350 aa).

3 residues coordinate Zn(2+): His-24, His-26, and His-207. Glu-210 functions as the Proton donor in the catalytic mechanism. Asp-288 serves as a coordination point for Zn(2+). Residue Asp-289 participates in substrate binding.

It belongs to the metallo-dependent hydrolases superfamily. Adenosine and AMP deaminases family. Adenine deaminase type 2 subfamily. Zn(2+) is required as a cofactor.

It catalyses the reaction adenine + H2O + H(+) = hypoxanthine + NH4(+). Catalyzes the hydrolytic deamination of adenine to hypoxanthine. Plays an important role in the purine salvage pathway and in nitrogen catabolism. This is Adenine deaminase from Paraburkholderia phytofirmans (strain DSM 17436 / LMG 22146 / PsJN) (Burkholderia phytofirmans).